The sequence spans 249 residues: uncharacterized protein (249 aa).

The protein belongs to the chlamydial CPn_0206/CT203/TC_0475 family.

This is an uncharacterized protein from Chlamydia muridarum (strain MoPn / Nigg).